A 311-amino-acid polypeptide reads, in one-letter code: Aspartate carbamoyltransferase catalytic subunit (311 aa).

Carbamoyl phosphate is bound by residues R52 and T53. K80 contacts L-aspartate. R102, H131, and Q134 together coordinate carbamoyl phosphate. L-aspartate contacts are provided by R164 and R216. The carbamoyl phosphate site is built by A259 and P260.

This sequence belongs to the aspartate/ornithine carbamoyltransferase superfamily. ATCase family. Heterododecamer (2C3:3R2) of six catalytic PyrB chains organized as two trimers (C3), and six regulatory PyrI chains organized as three dimers (R2).

It carries out the reaction carbamoyl phosphate + L-aspartate = N-carbamoyl-L-aspartate + phosphate + H(+). Its pathway is pyrimidine metabolism; UMP biosynthesis via de novo pathway; (S)-dihydroorotate from bicarbonate: step 2/3. Functionally, catalyzes the condensation of carbamoyl phosphate and aspartate to form carbamoyl aspartate and inorganic phosphate, the committed step in the de novo pyrimidine nucleotide biosynthesis pathway. The polypeptide is Aspartate carbamoyltransferase catalytic subunit (Lactiplantibacillus plantarum (strain ATCC BAA-793 / NCIMB 8826 / WCFS1) (Lactobacillus plantarum)).